The sequence spans 460 residues: Centrosomal protein CEP57L1 (460 aa).

Ser-49 carries the phosphoserine modification. Coiled-coil stretches lie at residues 51–228 and 317–384; these read NSQA…EISK and ISIC…LKKH. Residues 399 to 410 show a composition bias toward polar residues; the sequence is KMSEASGIQQED. A disordered region spans residues 399–423; the sequence is KMSEASGIQQEDSYPKGSKNIKNSP.

This sequence belongs to the translokin family.

Its subcellular location is the cytoplasm. It is found in the cytoskeleton. The protein localises to the microtubule organizing center. The protein resides in the centrosome. In terms of biological role, centrosomal protein which may be required for microtubule attachment to centrosomes. This chain is Centrosomal protein CEP57L1 (CEP57L1), found in Homo sapiens (Human).